The following is a 299-amino-acid chain: uncharacterized protein (299 aa).

Polar residues predominate over residues 1–10 (MTSIIQSPPL). Disordered regions lie at residues 1-30 (MTSI…NNNN), 54-89 (KLNN…INNN), and 148-212 (QDYT…SDYV). Residues 56-89 (NNNNNNNNNNNNNNNNNNNNNNNNSSSNNNINNN) are compositionally biased toward low complexity. Acidic residues-rich tracts occupy residues 150–169 (YTDE…DEEE) and 177–212 (ECEE…SDYV).

This is an uncharacterized protein from Dictyostelium discoideum (Social amoeba).